Here is a 763-residue protein sequence, read N- to C-terminus: Actin filament-associated protein 1-like 1 (763 aa).

Positions 83–137 (LQDMPEDEAESCKAASPEPAKSPSLRHTADLPPPLPNRPPPEDYYEEALPLGPGK) are disordered. Phosphoserine is present on residues Ser-98, Ser-104, and Ser-153. The segment at 169–210 (TRMNGELKNSYNDSDAMSSSYESYDEEEEEGKGPQPTHQWPS) is disordered. The span at 175-185 (LKNSYNDSDAM) shows a compositional bias: polar residues. Residues 220–316 (DCRICAFLLR…WLKVIREVSK (97 aa)) enclose the PH 1 domain. Residues Ser-329 and Ser-343 each carry the phosphoserine modification. The interval 343–380 (SQEKQTSDSDSLGMGDSCSTLGREHGKGKKSSLSELKG) is disordered. A PH 2 domain is found at 413–507 (EVPCCGYLNV…WLGLLLVEMG (95 aa)). At Tyr-552 the chain carries Phosphotyrosine. Residues 561 to 604 (QDEEPERPPGAQVKRHASTCSEKSHRVDPQVKVKRHASSAHQYK) are disordered. Residues 582-591 (EKSHRVDPQV) show a composition bias toward basic and acidic residues. Residues 606-694 (GKNRAEEDAR…LVTVKERLQQ (89 aa)) are a coiled coil. Polar residues predominate over residues 712 to 724 (SGETANKPQNNVP). Residues 712 to 763 (SGETANKPQNNVPEQPLPVNCVSELRKRSPSIINSNQGRVLQKAKEWEMKKT) are disordered. Ser-742 carries the post-translational modification Phosphoserine. Residues 754 to 763 (KAKEWEMKKT) show a composition bias toward basic and acidic residues.

As to quaternary structure, interacts with CTTN.

The protein resides in the cytoplasm. It localises to the cell projection. Its subcellular location is the podosome. The protein localises to the invadopodium. It is found in the cytoskeleton. The protein resides in the stress fiber. In terms of biological role, may be involved in podosome and invadosome formation. The chain is Actin filament-associated protein 1-like 1 (AFAP1L1) from Bos taurus (Bovine).